Here is a 160-residue protein sequence, read N- to C-terminus: Cytochrome b6-f complex subunit 4 (160 aa).

3 consecutive transmembrane segments (helical) span residues 36–56 (LLYM…SLAV), 95–115 (LLGV…PFIE), and 131–151 (TLFL…ALPI).

This sequence belongs to the cytochrome b family. PetD subfamily. As to quaternary structure, the 4 large subunits of the cytochrome b6-f complex are cytochrome b6, subunit IV (17 kDa polypeptide, petD), cytochrome f and the Rieske protein, while the 4 small subunits are petG, petL, petM and petN. The complex functions as a dimer.

It localises to the plastid. The protein resides in the chloroplast thylakoid membrane. In terms of biological role, component of the cytochrome b6-f complex, which mediates electron transfer between photosystem II (PSII) and photosystem I (PSI), cyclic electron flow around PSI, and state transitions. The sequence is that of Cytochrome b6-f complex subunit 4 from Oltmannsiellopsis viridis (Marine flagellate).